Consider the following 593-residue polypeptide: MITISILLMYLIVGLLTALTVLIFVFILLKFYEFRFFKQTETYQRELEQEILKINNQEELEEKLKEHYLFQSNHKVFTKRDLREIRNFFIAVLSDKILLENKNKLLSNEIIEKKKENEELKTKLDAKKVEEKITLLKEMNLTHEEAKKRLLEEYRGYVRNDLDKMVKEEEKAANDKKNAITNELNKLLINAMGNVSLLTETVRMNTVKTIKYEYVDVDPIKVKKVTDDFFGKIIGKEARNKKYIERLFNVEIIIKPESSRISISSFNTIKLEVAYNALNKIIEAVNDQGTHVLDESLIRKSWYGALNEFSAEAKRIGEETLKELGLYESAFIPTKEISEFIGRLKFRGSNTQNVLTHSIEAAQIAESIADQLNLNKEKAKVCALLHDIGKAIDKESVSSEGKWKNLKYAANDHVSAGVEIAQYYKFDIDIIDAINCHHGRKKIYEKSKNFYAKITKIADFLSAARPGVRFVKDNDIERRFDTISNILTKYVDEKIISTYKILKNGYNINLMINPDITESEYSQLTLDLKKDIESDKELSKYPITITYVQNITRSETTNAIAHAKKTVEIYSEDKAELVNDEELSTVEFLDEDI.

The helical transmembrane segment at Ile6–Phe26 threads the bilayer. The KH domain maps to Asp218–Leu278. In terms of domain architecture, HD spans Val354–Ala464.

Belongs to the RNase Y family.

The protein localises to the cell membrane. Endoribonuclease that initiates mRNA decay. The protein is Ribonuclease Y of Mycoplasmoides gallisepticum (strain R(low / passage 15 / clone 2)) (Mycoplasma gallisepticum).